Reading from the N-terminus, the 499-residue chain is Probable cytosol aminopeptidase (499 aa).

Mn(2+)-binding residues include Lys-271 and Asp-276. Lys-283 is a catalytic residue. Mn(2+) contacts are provided by Asp-294, Asp-353, and Glu-355. Arg-357 is an active-site residue.

This sequence belongs to the peptidase M17 family. Requires Mn(2+) as cofactor.

The protein localises to the cytoplasm. The enzyme catalyses Release of an N-terminal amino acid, Xaa-|-Yaa-, in which Xaa is preferably Leu, but may be other amino acids including Pro although not Arg or Lys, and Yaa may be Pro. Amino acid amides and methyl esters are also readily hydrolyzed, but rates on arylamides are exceedingly low.. It catalyses the reaction Release of an N-terminal amino acid, preferentially leucine, but not glutamic or aspartic acids.. In terms of biological role, presumably involved in the processing and regular turnover of intracellular proteins. Catalyzes the removal of unsubstituted N-terminal amino acids from various peptides. The polypeptide is Probable cytosol aminopeptidase (Bordetella bronchiseptica (strain ATCC BAA-588 / NCTC 13252 / RB50) (Alcaligenes bronchisepticus)).